A 123-amino-acid polypeptide reads, in one-letter code: Small ribosomal subunit protein uS12 (123 aa).

Asp-89 carries the 3-methylthioaspartic acid modification.

This sequence belongs to the universal ribosomal protein uS12 family. Part of the 30S ribosomal subunit. Contacts proteins S8 and S17. May interact with IF1 in the 30S initiation complex.

Its function is as follows. With S4 and S5 plays an important role in translational accuracy. Functionally, interacts with and stabilizes bases of the 16S rRNA that are involved in tRNA selection in the A site and with the mRNA backbone. Located at the interface of the 30S and 50S subunits, it traverses the body of the 30S subunit contacting proteins on the other side and probably holding the rRNA structure together. The combined cluster of proteins S8, S12 and S17 appears to hold together the shoulder and platform of the 30S subunit. The chain is Small ribosomal subunit protein uS12 from Sinorhizobium medicae (strain WSM419) (Ensifer medicae).